Consider the following 256-residue polypeptide: Small ribosomal subunit protein uS2 (256 aa).

The protein belongs to the universal ribosomal protein uS2 family.

This is Small ribosomal subunit protein uS2 from Streptococcus agalactiae serotype III (strain NEM316).